The chain runs to 444 residues: Xaa-Pro dipeptidase (444 aa).

D247, D258, H340, E385, and E424 together coordinate Mn(2+).

The protein belongs to the peptidase M24B family. Bacterial-type prolidase subfamily. It depends on Mn(2+) as a cofactor.

The enzyme catalyses Xaa-L-Pro dipeptide + H2O = an L-alpha-amino acid + L-proline. Splits dipeptides with a prolyl residue in the C-terminal position. The polypeptide is Xaa-Pro dipeptidase (Proteus mirabilis (strain HI4320)).